A 283-amino-acid polypeptide reads, in one-letter code: ATP synthase gamma chain (283 aa).

It belongs to the ATPase gamma chain family. F-type ATPases have 2 components, CF(1) - the catalytic core - and CF(0) - the membrane proton channel. CF(1) has five subunits: alpha(3), beta(3), gamma(1), delta(1), epsilon(1). CF(0) has three main subunits: a, b and c.

It is found in the cell membrane. Functionally, produces ATP from ADP in the presence of a proton gradient across the membrane. The gamma chain is believed to be important in regulating ATPase activity and the flow of protons through the CF(0) complex. This Clostridium perfringens (strain ATCC 13124 / DSM 756 / JCM 1290 / NCIMB 6125 / NCTC 8237 / Type A) protein is ATP synthase gamma chain.